The chain runs to 362 residues: Chorismate synthase (362 aa).

2 residues coordinate NADP(+): Arg-48 and Arg-54. FMN is bound by residues 131–133 (RSS), 243–244 (NA), Gly-287, 302–306 (KPTSS), and Arg-328.

It belongs to the chorismate synthase family. As to quaternary structure, homotetramer. FMNH2 serves as cofactor.

It carries out the reaction 5-O-(1-carboxyvinyl)-3-phosphoshikimate = chorismate + phosphate. It functions in the pathway metabolic intermediate biosynthesis; chorismate biosynthesis; chorismate from D-erythrose 4-phosphate and phosphoenolpyruvate: step 7/7. Functionally, catalyzes the anti-1,4-elimination of the C-3 phosphate and the C-6 proR hydrogen from 5-enolpyruvylshikimate-3-phosphate (EPSP) to yield chorismate, which is the branch point compound that serves as the starting substrate for the three terminal pathways of aromatic amino acid biosynthesis. This reaction introduces a second double bond into the aromatic ring system. In Bradyrhizobium diazoefficiens (strain JCM 10833 / BCRC 13528 / IAM 13628 / NBRC 14792 / USDA 110), this protein is Chorismate synthase.